A 234-amino-acid chain; its full sequence is LexA repressor (234 aa).

Positions 26 to 46 (FDEMKTALELTSKSGIHRLIT) form a DNA-binding region, H-T-H motif. Residues Ser155 and Lys193 each act as for autocatalytic cleavage activity in the active site.

The protein belongs to the peptidase S24 family. In terms of assembly, homodimer.

It carries out the reaction Hydrolysis of Ala-|-Gly bond in repressor LexA.. Represses a number of genes involved in the response to DNA damage (SOS response), including recA and lexA. In the presence of single-stranded DNA, RecA interacts with LexA causing an autocatalytic cleavage which disrupts the DNA-binding part of LexA, leading to derepression of the SOS regulon and eventually DNA repair. The chain is LexA repressor from Bartonella henselae (strain ATCC 49882 / DSM 28221 / CCUG 30454 / Houston 1) (Rochalimaea henselae).